The following is an 845-amino-acid chain: Disintegrin and metalloproteinase domain-containing protein 9 (845 aa).

The first 29 residues, 1–29, serve as a signal peptide directing secretion; the sequence is MGPRALSPLASLRLRWLLACGLLGPVLEA. Residues 30–697 are Extracellular-facing; that stretch reads GRPDLEQTVH…YNAKSTALRD (668 aa). 3 N-linked (GlcNAc...) asparagine glycosylation sites follow: Asn144, Asn154, and Asn231. A Peptidase M12B domain is found at 212–406; sequence RYVELFIVVD…KGGSCLLNIP (195 aa). 4 disulfides stabilise this stretch: Cys322/Cys401, Cys363/Cys385, Cys365/Cys370, and Cys473/Cys493. His347 contacts Zn(2+). Glu348 is an active-site residue. 2 residues coordinate Zn(2+): His351 and His357. N-linked (GlcNAc...) asparagine glycans are attached at residues Asn381, Asn487, and Asn636. In terms of domain architecture, Disintegrin spans 414-501; the sequence is APSCGNKLVD…FCPPDVFIQN (88 aa). Disulfide bonds link Cys644–Cys656, Cys650–Cys662, and Cys664–Cys673. The region spanning 644–698 is the EGF-like domain; sequence CDIQGKCHGHGVCNSNKNCHCEDGWAPPHCDTKGYGGSVDSGPTYNAKSTALRDG. Residues 698-718 traverse the membrane as a helical segment; the sequence is GLLVFFFLIVPLVAAAIFLFI. Residues 719–845 are Cytoplasmic-facing; the sequence is KRDELRKTFR…PAPPLYSSLT (127 aa). Residues 729-845 form a disordered region; it reads KKRSQMSDGR…PAPPLYSSLT (117 aa). The segment covering 734 to 745 has biased composition (polar residues); it reads MSDGRNQANVSR. Residues 783–794 show a composition bias toward pro residues; it reads PGGPGVSRPPPG.

As to quaternary structure, interacts with SH3GL2 and SNX9 through its cytoplasmic tail. Interacts with ITGA6. Zn(2+) is required as a cofactor. Proteolytically cleaved in the trans-Golgi network before it reaches the plasma membrane to generate a mature protein. The removal of the pro-domain occurs via cleavage at two different sites. Processed most likely by a pro-protein convertase such as furin, at the boundary between the pro-domain and the catalytic domain. An additional upstream cleavage pro-protein convertase site (Arg-56/Glu-57) has an important role in the activation of ADAM9. Post-translationally, phosphorylation is induced in vitro by phorbol-12-myristate-13-acetate (PMA).

It is found in the cell membrane. Its activity is regulated as follows. Synthesized as an inactive form which is proteolytically cleaved to generate an active enzyme. Processing at the upstream site is particularly important for activation of the proenzyme, whereas processing at the boundary between the pro-domain and the catalytic domain does not appear to be essential. Inhibited by hydroxamic acid-based inhibitors. Metalloprotease that cleaves and releases a number of molecules with important roles in tumorigenesis and angiogenesis, such as TEK, KDR, EPHB4, CD40, VCAM1 and CDH5. May mediate cell-cell, cell-matrix interactions and regulate the motility of cells via interactions with integrins. This is Disintegrin and metalloproteinase domain-containing protein 9 from Mus musculus (Mouse).